Consider the following 497-residue polypeptide: MSGGGGEMEERLLNGSETEQRRESLYLRKKIWSEVRKMWRIALPSTLFRVMSFGCVVVAQAFIGHSSETGLAAYALLQSTFIRFIYGIMAGMSSATETLCGQAYGAEQYHMMGIYLQRSWIVDTFIATLFVPFIVLAGPILRLLGQNVVISETVDEIYPWVIPYLYSIVFTMTMQMYLQAQMKNAIIGILSTLALVLDIAATWWCVSVMGMGIHGALLGLNISSWSVAIAEFVYVFGGWCPHTWTGFSTAAFLDLIPMLKLSISSGFMLCLEYWYMSIIVLMSGYAKDANIAISAFSICQYIYSWEMNICFGLMGAACVRVANELGKGDADAVRFSIKVVLVVSAVIGVICSALCLAFGGQISYLFSDSQAVSDAVADLSIVLSISILFNIIQPILSGVAIGAGMQSMVALVNLASYYAIGVPLGVLLVYVFNFGIKGLWSGMLAGVGIQTLILCYVIYKTDWELEVKKTNERMKTWTLNLPAVQSTTISTRDEERK.

The next 12 helical transmembrane spans lie at 43–63 (LPST…QAFI), 70–90 (GLAA…GIMA), 121–141 (IVDT…GPIL), 157–177 (IYPW…MQMY), 186–206 (IIGI…WWCV), 216–236 (ALLG…VYVF), 261–281 (LSIS…IIVL), 291–311 (IAIS…NICF), 339–359 (VVLV…LAFG), 381–401 (IVLS…GVAI), 416–436 (SYYA…NFGI), and 438–458 (GLWS…CYVI).

The protein belongs to the multi antimicrobial extrusion (MATE) (TC 2.A.66.1) family.

The protein localises to the membrane. The polypeptide is Protein DETOXIFICATION 25 (Arabidopsis thaliana (Mouse-ear cress)).